Reading from the N-terminus, the 387-residue chain is Patatin-03 (387 aa).

The signal sequence occupies residues 1–23 (MATTKSVLVLIFMILATTSSTFA). The region spanning 32 to 230 (LSIDGGGIKG…TVADPALLSV (199 aa)) is the PNPLA domain. Positions 36 to 41 (GGGIKG) match the GXGXXG motif. The GXSXG signature appears at 75–79 (GTSTG). Residue Ser77 is the Nucleophile of the active site. 2 N-linked (GlcNAc...) asparagine glycosylation sites follow: Asn115 and Asn203. Asp216 acts as the Proton acceptor in catalysis. The DGA/G signature appears at 216-218 (DGA).

Belongs to the patatin family. As to expression, tuber.

Its subcellular location is the vacuole. Probable lipolytic acyl hydrolase (LAH), an activity which is thought to be involved in the response of tubers to pathogens. The protein is Patatin-03 of Solanum tuberosum (Potato).